Reading from the N-terminus, the 755-residue chain is Polyribonucleotide nucleotidyltransferase (755 aa).

Mg(2+) contacts are provided by aspartate 527 and aspartate 533. Positions 593-652 (PRITTIKVPVDKIGEVIGPKGKMINSITEETGANISIEDDGTVFVGAADGASAQAAIDKI) constitute a KH domain. The S1 motif domain occupies 664–733 (GERFLGTVVK…NRGKISLVPV (70 aa)). The disordered stretch occupies residues 734–755 (GEEDAAEAPAPAEAQPADAVTQ). Residues 740-755 (EAPAPAEAQPADAVTQ) are compositionally biased toward low complexity.

Belongs to the polyribonucleotide nucleotidyltransferase family. Mg(2+) serves as cofactor.

It localises to the cytoplasm. The catalysed reaction is RNA(n+1) + phosphate = RNA(n) + a ribonucleoside 5'-diphosphate. Its function is as follows. Involved in mRNA degradation. Catalyzes the phosphorolysis of single-stranded polyribonucleotides processively in the 3'- to 5'-direction. This chain is Polyribonucleotide nucleotidyltransferase, found in Mycobacteroides abscessus (strain ATCC 19977 / DSM 44196 / CCUG 20993 / CIP 104536 / JCM 13569 / NCTC 13031 / TMC 1543 / L948) (Mycobacterium abscessus).